The chain runs to 198 residues: Protein GrpE (198 aa).

Residues 1-14 (MSNEENKINEEALK) are compositionally biased toward basic and acidic residues. A disordered region spans residues 1 to 20 (MSNEENKINEEALKQQDAAE).

It belongs to the GrpE family. As to quaternary structure, homodimer.

It is found in the cytoplasm. In terms of biological role, participates actively in the response to hyperosmotic and heat shock by preventing the aggregation of stress-denatured proteins, in association with DnaK and GrpE. It is the nucleotide exchange factor for DnaK and may function as a thermosensor. Unfolded proteins bind initially to DnaJ; upon interaction with the DnaJ-bound protein, DnaK hydrolyzes its bound ATP, resulting in the formation of a stable complex. GrpE releases ADP from DnaK; ATP binding to DnaK triggers the release of the substrate protein, thus completing the reaction cycle. Several rounds of ATP-dependent interactions between DnaJ, DnaK and GrpE are required for fully efficient folding. This chain is Protein GrpE, found in Vibrio vulnificus (strain YJ016).